Here is a 437-residue protein sequence, read N- to C-terminus: uncharacterized protein (437 aa).

Composition is skewed to basic residues over residues 1 to 29 (MDTPLRGRRAAGRGVRARARPRTRRRHRN), 81 to 91 (LRGRHPRVRRV), and 101 to 118 (RRRHLLRRRVGGHRGRNR). Disordered stretches follow at residues 1–31 (MDTPLRGRRAAGRGVRARARPRTRRRHRNDH) and 77–437 (EHVP…QGTR). The span at 119 to 132 (HAGDRRAPGVDSRL) shows a compositional bias: basic and acidic residues. The segment covering 133–142 (RQQHQHPRGR) has biased composition (basic residues). The segment covering 143–164 (HASDRVQDGAHPRRQRLREQPR) has biased composition (basic and acidic residues). Residues 165–190 (HAGRPRRRQPPRRGRSRGTHRRHLRQ) show a composition bias toward basic residues. Composition is skewed to basic and acidic residues over residues 198–209 (GPDEDQAREFRG) and 217–253 (HPPTARDVLRGEPGHGDGHHLEGRRGRPRPQGREAGR). 2 stretches are compositionally biased toward basic residues: residues 284 to 293 (TVHRGGRLRG) and 324 to 348 (PHSRKRRDTGAHHRHWRRRRRRVRH). Residues 371-382 (DAAAYASVPAHA) are compositionally biased toward low complexity.

This is an uncharacterized protein from Haloferax lucentense (strain DSM 14919 / JCM 9276 / NCIMB 13854 / Aa 2.2) (Haloferax alicantei).